Reading from the N-terminus, the 147-residue chain is Large ribosomal subunit protein bL9 (147 aa).

Belongs to the bacterial ribosomal protein bL9 family.

Binds to the 23S rRNA. This chain is Large ribosomal subunit protein bL9, found in Cytophaga hutchinsonii (strain ATCC 33406 / DSM 1761 / CIP 103989 / NBRC 15051 / NCIMB 9469 / D465).